An 84-amino-acid chain; its full sequence is Putative movement protein (84 aa).

The chain crosses the membrane as a helical span at residues 15-35 (ALHGILVAFIAVLCLIGCLWA).

In terms of assembly, interacts with the capsid protein (CP). Part of a MP-CP-viral DNA complex.

Its subcellular location is the host membrane. Functionally, involved in the viral transport within, and between cells. This Miscanthus streak virus (isolate 91) (MiSV) protein is Putative movement protein.